The primary structure comprises 221 residues: Ubiquitin-conjugating enzyme E2 S (221 aa).

The region spanning Gln-11 to Met-157 is the UBC core domain. Residue Cys-95 is the Glycyl thioester intermediate of the active site. A disordered region spans residues Gly-158–Leu-221. Over residues Gly-193–Ile-206 the composition is skewed to low complexity. Residues Ala-208–Leu-221 are compositionally biased toward basic residues.

It belongs to the ubiquitin-conjugating enzyme family.

The catalysed reaction is S-ubiquitinyl-[E1 ubiquitin-activating enzyme]-L-cysteine + [E2 ubiquitin-conjugating enzyme]-L-cysteine = [E1 ubiquitin-activating enzyme]-L-cysteine + S-ubiquitinyl-[E2 ubiquitin-conjugating enzyme]-L-cysteine.. It participates in protein modification; protein ubiquitination. In terms of biological role, catalyzes the covalent attachment of ubiquitin to other proteins. Acts as an essential factor of the anaphase promoting complex/cyclosome (APC/C), a cell cycle-regulated ubiquitin ligase that controls progression through mitosis. Acts by specifically elongating 'Lys-11'-linked polyubiquitin chains initiated by the E2 enzyme ube2c/ubch10 on APC/C substrates, enhancing the degradation of APC/C substrates by the proteasome and promoting mitotic exit. This is Ubiquitin-conjugating enzyme E2 S (ube2s) from Danio rerio (Zebrafish).